The following is a 171-amino-acid chain: 3-hydroxydecanoyl-[acyl-carrier-protein] dehydratase (171 aa).

H70 is an active-site residue.

Belongs to the thioester dehydratase family. FabA subfamily. As to quaternary structure, homodimer.

It is found in the cytoplasm. The catalysed reaction is a (3R)-hydroxyacyl-[ACP] = a (2E)-enoyl-[ACP] + H2O. It catalyses the reaction (3R)-hydroxydecanoyl-[ACP] = (2E)-decenoyl-[ACP] + H2O. The enzyme catalyses (2E)-decenoyl-[ACP] = (3Z)-decenoyl-[ACP]. It participates in lipid metabolism; fatty acid biosynthesis. Necessary for the introduction of cis unsaturation into fatty acids. Catalyzes the dehydration of (3R)-3-hydroxydecanoyl-ACP to E-(2)-decenoyl-ACP and then its isomerization to Z-(3)-decenoyl-ACP. Can catalyze the dehydratase reaction for beta-hydroxyacyl-ACPs with saturated chain lengths up to 16:0, being most active on intermediate chain length. This is 3-hydroxydecanoyl-[acyl-carrier-protein] dehydratase from Stutzerimonas stutzeri (strain A1501) (Pseudomonas stutzeri).